A 295-amino-acid chain; its full sequence is Putative fused nickel transport protein NikMN (295 aa).

The next 8 helical transmembrane spans lie at Leu8–Ile28, Leu39–Gly59, Leu70–Ile90, Gly98–Gly118, Phe135–Ile155, Ala175–Ala195, Leu211–Val231, and Ala268–Leu288.

It belongs to the CbiM family. NikM subfamily.

It localises to the cell membrane. In terms of biological role, may be involved in nickel transport. The polypeptide is Putative fused nickel transport protein NikMN (Archaeoglobus fulgidus (strain ATCC 49558 / DSM 4304 / JCM 9628 / NBRC 100126 / VC-16)).